An 871-amino-acid chain; its full sequence is Pentatricopeptide repeat-containing protein DOT4, chloroplastic (871 aa).

Residues 1-28 constitute a chloroplast transit peptide; the sequence is MAMLVTNLSSSSFCFFSSPHLQNQKEIR. 18 PPR repeats span residues 60–94, 96–127, 128–158, 159–193, 194–228, 229–259, 260–294, 295–329, 330–360, 361–395, 396–430, 431–465, 466–497, 498–532, 533–563, 564–598, 599–629, and 635–665; these read SVTDANTQLRRFCESGNLENAVKLLCVSGKWDIDP, TLCSVLQLCADSKSLKDGKEVDNFIRGNGFVI, DSNLGSKLSLMYTNCGDLKEASRVFDEVKIE, KALFWNILMNELAKSGDFSGSIGLFKKMMSSGVEM, DSYTFSCVSKSFSSLRSVHGGEQLHGFILKSGFGE, RNSVGNSLVAFYLKNQRVDSARKVFDEMTER, DVISWNSIINGYVSNGLAEKGLSVFVQMLVSGIEI, DLATIVSVFAGCADSRLISLGRAVHSIGVKACFSR, EDRFCNTLLDMYSKCGDLDSAKAVFREMSDR, SVVSYTSMIAGYAREGLAGEAVKLFEEMEEEGISP, DVYTVTAVLNCCARYRLLDEGKRVHEWIKENDLGF, DIFVSNALMDMYAKCGSMQEAELVFSEMRVKDIIS, WNTIIGGYSKNCYANEALSLFNLLLEEKRFSP, DERTVACVLPACASLSAFDKGREIHGYIMRNGYFS, DRHVANSLVDMYAKCGALLLAHMLFDDIASK, DLVSWTVMIAGYGMHGFGKEAIALFNQMRQAGIEA, DEISFVSLLYACSHSGLVDEGWRFFNIMRHE, and TVEHYACIVDMLARTGDLIKAYRFIENMPIP. The type E motif stretch occupies residues 670–745; the sequence is IWGALLCGCR…NPGCSWIEIK (76 aa). The tract at residues 746 to 776 is type E(+) motif; the sequence is GRVNIFVAGDSSNPETENIEAFLRKVRARMI. The type DYW motif stretch occupies residues 777 to 871; it reads EEGYSPLTKY…DGHCSCRGFW (95 aa).

It belongs to the PPR family. PCMP-H subfamily. It depends on Zn(2+) as a cofactor. As to expression, weakly expressed in leaves.

Its subcellular location is the plastid. It localises to the chloroplast. In terms of biological role, plays a major role in single RNA editing events in chloroplasts. Acts as a site-recognition transacting factor involved in the edition of the unique site (corresponding to cytidine-488) of rpoC1, which is a plastid-encoded subunit of the chloroplast DNA-directed RNA polymerase. May provide the catalytic activity for editing site conversion. Involved in leaf vasculature patterning. The polypeptide is Pentatricopeptide repeat-containing protein DOT4, chloroplastic (Arabidopsis thaliana (Mouse-ear cress)).